Here is a 101-residue protein sequence, read N- to C-terminus: Large ribosomal subunit protein bL21 (101 aa).

This sequence belongs to the bacterial ribosomal protein bL21 family. In terms of assembly, part of the 50S ribosomal subunit. Contacts protein L20.

In terms of biological role, this protein binds to 23S rRNA in the presence of protein L20. The chain is Large ribosomal subunit protein bL21 from Corynebacterium glutamicum (strain R).